Reading from the N-terminus, the 178-residue chain is Leukemia NUP98 fusion partner 1 (178 aa).

Disordered stretches follow at residues 28 to 55 (EDQR…PLPV), 89 to 108 (SEDG…HSKI), and 147 to 178 (IKSR…KGPE). Residues 34 to 47 (RERHRLQATSHRKT) show a composition bias toward basic residues. Positions 147 to 167 (IKSRKKVEEERSSRKEEHGEA) are enriched in basic and acidic residues.

The chain is Leukemia NUP98 fusion partner 1 (LNP1) from Homo sapiens (Human).